Consider the following 348-residue polypeptide: MKIAVDAMGGDFAPLEIVKGIEIARDRYDDIDFQLYGTASEVKPLVTNWERIELIPTTEVIEMGDEPVKAMRRKKDSSMVRAALAVKEGHADALFSAGNTGALLSSAIFLVGRIKGVDRPALATALPSFEGEHDQFVFMDLGANADSKPAHLYQYGILGSFYASHVLGIQSPTVRLLNNGAEEDKGDEVHKVAHQLMKNAPSFNFLGNIEARELLEGTADVVVADGFSGNAALKATEGTALMMLKQIKAAIMDSGTRGKMGGALLKPAFKSIQKKLDYNEAGGAVILGVKAPVVKTHGSAKATAVANTMGQIKTMIDQHLVSDIQNYIDTHTEELQAGKEALNAQINA.

Belongs to the PlsX family. In terms of assembly, homodimer. Probably interacts with PlsY.

The protein localises to the cytoplasm. The catalysed reaction is a fatty acyl-[ACP] + phosphate = an acyl phosphate + holo-[ACP]. It functions in the pathway lipid metabolism; phospholipid metabolism. In terms of biological role, catalyzes the reversible formation of acyl-phosphate (acyl-PO(4)) from acyl-[acyl-carrier-protein] (acyl-ACP). This enzyme utilizes acyl-ACP as fatty acyl donor, but not acyl-CoA. The protein is Phosphate acyltransferase of Leuconostoc citreum (strain KM20).